Consider the following 316-residue polypeptide: Putative S-adenosyl-L-methionine-dependent methyltransferase MAB_4606c (316 aa).

S-adenosyl-L-methionine-binding positions include Asp-137 and 166-167 (DL).

This sequence belongs to the UPF0677 family.

Exhibits S-adenosyl-L-methionine-dependent methyltransferase activity. This is Putative S-adenosyl-L-methionine-dependent methyltransferase MAB_4606c from Mycobacteroides abscessus (strain ATCC 19977 / DSM 44196 / CCUG 20993 / CIP 104536 / JCM 13569 / NCTC 13031 / TMC 1543 / L948) (Mycobacterium abscessus).